The sequence spans 159 residues: Transcriptional repressor NrdR (159 aa).

The segment at 3–34 is a zinc-finger region; sequence CPTCQNTDSRVLESRSADTGKSVRRRRECLNC. One can recognise an ATP-cone domain in the interval 49–139; it reads ISVIKKDGSR…VYRKFNGVKD (91 aa).

This sequence belongs to the NrdR family. Zn(2+) serves as cofactor.

Negatively regulates transcription of bacterial ribonucleotide reductase nrd genes and operons by binding to NrdR-boxes. The sequence is that of Transcriptional repressor NrdR from Prochlorococcus marinus subsp. pastoris (strain CCMP1986 / NIES-2087 / MED4).